Here is an 80-residue protein sequence, read N- to C-terminus: Defensin-like protein 13 (80 aa).

A signal peptide spans 1 to 29; sequence MAKSATIVTLFFAALVFFAALEAPMVVEA. Glutamine 30 carries the post-translational modification Pyrrolidone carboxylic acid. 4 disulfide bridges follow: cysteine 33-cysteine 80, cysteine 44-cysteine 65, cysteine 50-cysteine 74, and cysteine 54-cysteine 76.

This sequence belongs to the DEFL family. As to quaternary structure, forms oligomers in its native state. In terms of tissue distribution, expressed predominantly in siliques and dry seeds.

The protein localises to the secreted. Its function is as follows. Confers broad-spectrum resistance to pathogens. Possesses antifungal activity sensitive to inorganic cations in vitro. This is Defensin-like protein 13 (PDF1.1) from Arabidopsis thaliana (Mouse-ear cress).